The sequence spans 181 residues: ATP synthase subunit delta (181 aa).

It belongs to the ATPase delta chain family. In terms of assembly, F-type ATPases have 2 components, F(1) - the catalytic core - and F(0) - the membrane proton channel. F(1) has five subunits: alpha(3), beta(3), gamma(1), delta(1), epsilon(1). F(0) has three main subunits: a(1), b(2) and c(10-14). The alpha and beta chains form an alternating ring which encloses part of the gamma chain. F(1) is attached to F(0) by a central stalk formed by the gamma and epsilon chains, while a peripheral stalk is formed by the delta and b chains.

The protein localises to the cell membrane. Its function is as follows. F(1)F(0) ATP synthase produces ATP from ADP in the presence of a proton or sodium gradient. F-type ATPases consist of two structural domains, F(1) containing the extramembraneous catalytic core and F(0) containing the membrane proton channel, linked together by a central stalk and a peripheral stalk. During catalysis, ATP synthesis in the catalytic domain of F(1) is coupled via a rotary mechanism of the central stalk subunits to proton translocation. In terms of biological role, this protein is part of the stalk that links CF(0) to CF(1). It either transmits conformational changes from CF(0) to CF(1) or is implicated in proton conduction. The protein is ATP synthase subunit delta of Oceanobacillus iheyensis (strain DSM 14371 / CIP 107618 / JCM 11309 / KCTC 3954 / HTE831).